Consider the following 332-residue polypeptide: MFPARRGLHTTSRACARTRFTKPKPKPAKRENVRLPTQRTHHDNDLKITAPIPPAAANLTCPDDHPLWQFFSEKKFLRTPEELDTLSRPWTIPELRRKSFTDLHSLWYTCLKERNVLARENHLVQFNFEAQTEAYQDISEKIRTTMWRIRHVLSERDWAFKIANEKFAVEKQVFIESFEKDFLEAPANEDEEIFESLQRFQYAIYGISEYIDENKVDRTFVDGLKAVATLKLKKFALRNEDIKNFLEESNNTIVDAGESFLLYTSENTESAIAEACQAVRELRENGSSVSRYDELETVQEYVNKLAEAQMAKVTEAEIQLQEEDAKNNANTL.

A disordered region spans residues 19–40 (RFTKPKPKPAKRENVRLPTQRT). Positions 264–327 (TSENTESAIA…IQLQEEDAKN (64 aa)) form a coiled coil.

Belongs to the universal ribosomal protein uL29 family. Component of the mitochondrial large ribosomal subunit. Mature mitochondrial ribosomes consist of a small (37S) and a large (54S) subunit. The 37S subunit contains at least 33 different proteins and 1 molecule of RNA (15S). The 54S subunit contains at least 45 different proteins and 1 molecule of RNA (21S).

It is found in the mitochondrion. The sequence is that of Large ribosomal subunit protein uL29m (MRPL4) from Kluyveromyces lactis (strain ATCC 8585 / CBS 2359 / DSM 70799 / NBRC 1267 / NRRL Y-1140 / WM37) (Yeast).